Reading from the N-terminus, the 364-residue chain is Protein LATERAL BRANCHING OXIDOREDUCTASE 1 (364 aa).

A Fe2OG dioxygenase domain is found at 203–312 (RFEEMFGEAV…RLTIVTFYAP (110 aa)). H235, D237, and H293 together coordinate Fe cation. 2-oxoglutarate is bound at residue R303.

It belongs to the iron/ascorbate-dependent oxidoreductase family. In terms of assembly, monomer. It depends on Fe(2+) as a cofactor. L-ascorbate serves as cofactor. In terms of tissue distribution, expressed in the vasculature throughout the plant and in the buds and root tips.

The protein localises to the cytoplasm. The enzyme catalyses (11R)-methyl carlactonoate + 2-oxoglutarate + O2 = (11R)-hydroxymethyl carlactonoate + succinate + CO2. Oxoglutarate-dependent dioxygenase involved in the biosynthesis of strigolactone natural products, bioactive compounds promoting plant fitness and soil microbe interactions, but preventing shoot branching. Catalyzes the hydroxylation of (11R)-methyl carlactonoate (MeCLA) to produce (11R)-hydroxymethyl carlactonoate (1'-HO-MeCLA) in final stages of strigolactone biosynthesis, downstream of MAX1 and CLAMT. The chain is Protein LATERAL BRANCHING OXIDOREDUCTASE 1 from Arabidopsis thaliana (Mouse-ear cress).